Reading from the N-terminus, the 680-residue chain is DNA ligase (680 aa).

Residues 35–39 (DADFD), 86–87 (SL), and glutamate 111 each bind NAD(+). The active-site N6-AMP-lysine intermediate is lysine 113. NAD(+)-binding residues include arginine 134, glutamate 174, lysine 290, and lysine 314. Residues cysteine 408, cysteine 411, cysteine 427, and cysteine 433 each coordinate Zn(2+). The region spanning 597–680 (VAEQTLEGLT…RLLNTGSADE (84 aa)) is the BRCT domain.

Belongs to the NAD-dependent DNA ligase family. LigA subfamily. It depends on Mg(2+) as a cofactor. Mn(2+) is required as a cofactor.

It catalyses the reaction NAD(+) + (deoxyribonucleotide)n-3'-hydroxyl + 5'-phospho-(deoxyribonucleotide)m = (deoxyribonucleotide)n+m + AMP + beta-nicotinamide D-nucleotide.. Its function is as follows. DNA ligase that catalyzes the formation of phosphodiester linkages between 5'-phosphoryl and 3'-hydroxyl groups in double-stranded DNA using NAD as a coenzyme and as the energy source for the reaction. It is essential for DNA replication and repair of damaged DNA. In Corynebacterium glutamicum (strain ATCC 13032 / DSM 20300 / JCM 1318 / BCRC 11384 / CCUG 27702 / LMG 3730 / NBRC 12168 / NCIMB 10025 / NRRL B-2784 / 534), this protein is DNA ligase.